We begin with the raw amino-acid sequence, 172 residues long: MPTPTKGPRLGGGPAHERLMLANLATALFRHGRIKTTEAKAKRLRPYAEKLITLGKRGDLHARRQVLTKIRDKAVVHELFTEIGPRYENRNGGYTRITKIGNRKGDNAPMAVIELVEALNKPATGSKRAQTEEAASQEPAAEAGKQPAEGATSVQTAEAADASQAEGEAEEK.

The tract at residues 123-172 (ATGSKRAQTEEAASQEPAAEAGKQPAEGATSVQTAEAADASQAEGEAEEK) is disordered. Residues 132–143 (EEAASQEPAAEA) are compositionally biased toward low complexity.

The protein belongs to the bacterial ribosomal protein bL17 family. Part of the 50S ribosomal subunit. Contacts protein L32.

In Thermobifida fusca (strain YX), this protein is Large ribosomal subunit protein bL17.